Consider the following 305-residue polypeptide: MIKQRTLKQSIKVTGVGLHSGNKVTLTLRPAMANTGVIYCRTDLNPPVTFPANANAVRDTMLCTCLVNEEGVRISTVEHLNAALAGLGIDNVIIEVDAPEIPIMDGSASPFIYLLLDAGIEEQNAAKKFIRIKQKVRVEDGDKWAEFTPYNGFRLDFTIDFEHPAIGKDVRNYVMDFSAQAFVQQISRARTFGFMKDIEYLQSQGLALGGSLDNAIVLDDYRILNEDGLRFKDELVRHKMLDAIGDLYMAGYNIIGDFKAYKSGHGLNNKLLRAVLANQEAWEFVTFDDKQAVPHGYEAPTQVLI.

Zn(2+)-binding residues include H79, H238, and D242. H265 acts as the Proton donor in catalysis.

It belongs to the LpxC family. Zn(2+) is required as a cofactor.

It carries out the reaction a UDP-3-O-[(3R)-3-hydroxyacyl]-N-acetyl-alpha-D-glucosamine + H2O = a UDP-3-O-[(3R)-3-hydroxyacyl]-alpha-D-glucosamine + acetate. The protein operates within glycolipid biosynthesis; lipid IV(A) biosynthesis; lipid IV(A) from (3R)-3-hydroxytetradecanoyl-[acyl-carrier-protein] and UDP-N-acetyl-alpha-D-glucosamine: step 2/6. Catalyzes the hydrolysis of UDP-3-O-myristoyl-N-acetylglucosamine to form UDP-3-O-myristoylglucosamine and acetate, the committed step in lipid A biosynthesis. This is UDP-3-O-acyl-N-acetylglucosamine deacetylase from Pasteurella multocida (strain Pm70).